Reading from the N-terminus, the 285-residue chain is Bifunctional protein FolD (285 aa).

NADP(+) is bound by residues 166–168, Ser-191, and Thr-232; that span reads GRS.

This sequence belongs to the tetrahydrofolate dehydrogenase/cyclohydrolase family. As to quaternary structure, homodimer.

The catalysed reaction is (6R)-5,10-methylene-5,6,7,8-tetrahydrofolate + NADP(+) = (6R)-5,10-methenyltetrahydrofolate + NADPH. It catalyses the reaction (6R)-5,10-methenyltetrahydrofolate + H2O = (6R)-10-formyltetrahydrofolate + H(+). It participates in one-carbon metabolism; tetrahydrofolate interconversion. Its function is as follows. Catalyzes the oxidation of 5,10-methylenetetrahydrofolate to 5,10-methenyltetrahydrofolate and then the hydrolysis of 5,10-methenyltetrahydrofolate to 10-formyltetrahydrofolate. The polypeptide is Bifunctional protein FolD (Chloroflexus aurantiacus (strain ATCC 29366 / DSM 635 / J-10-fl)).